The chain runs to 260 residues: Acyl-[acyl-carrier-protein]--UDP-N-acetylglucosamine O-acyltransferase (260 aa).

Belongs to the transferase hexapeptide repeat family. LpxA subfamily. As to quaternary structure, homotrimer.

It is found in the cytoplasm. It carries out the reaction a (3R)-hydroxyacyl-[ACP] + UDP-N-acetyl-alpha-D-glucosamine = a UDP-3-O-[(3R)-3-hydroxyacyl]-N-acetyl-alpha-D-glucosamine + holo-[ACP]. Its pathway is glycolipid biosynthesis; lipid IV(A) biosynthesis; lipid IV(A) from (3R)-3-hydroxytetradecanoyl-[acyl-carrier-protein] and UDP-N-acetyl-alpha-D-glucosamine: step 1/6. Its function is as follows. Involved in the biosynthesis of lipid A, a phosphorylated glycolipid that anchors the lipopolysaccharide to the outer membrane of the cell. This chain is Acyl-[acyl-carrier-protein]--UDP-N-acetylglucosamine O-acyltransferase, found in Sulfurovum sp. (strain NBC37-1).